A 200-amino-acid polypeptide reads, in one-letter code: Dephospho-CoA kinase (200 aa).

One can recognise a DPCK domain in the interval 4-200 (VIGLTGGIAS…AILKKWNIID (197 aa)). 12–17 (ASGKST) is an ATP binding site.

The protein belongs to the CoaE family.

Its subcellular location is the cytoplasm. The enzyme catalyses 3'-dephospho-CoA + ATP = ADP + CoA + H(+). It participates in cofactor biosynthesis; coenzyme A biosynthesis; CoA from (R)-pantothenate: step 5/5. In terms of biological role, catalyzes the phosphorylation of the 3'-hydroxyl group of dephosphocoenzyme A to form coenzyme A. This is Dephospho-CoA kinase from Bacillus cereus (strain ZK / E33L).